A 275-amino-acid polypeptide reads, in one-letter code: NH(3)-dependent NAD(+) synthetase (275 aa).

ATP is bound at residue 46–53 (GISGGQDS). Residue D52 participates in Mg(2+) binding. Residue R140 participates in deamido-NAD(+) binding. Residue T160 coordinates ATP. E165 provides a ligand contact to Mg(2+). 2 residues coordinate deamido-NAD(+): K173 and D180. ATP is bound by residues K189 and T211. Residue 260–261 (HK) coordinates deamido-NAD(+).

It belongs to the NAD synthetase family. As to quaternary structure, homodimer.

The enzyme catalyses deamido-NAD(+) + NH4(+) + ATP = AMP + diphosphate + NAD(+) + H(+). The protein operates within cofactor biosynthesis; NAD(+) biosynthesis; NAD(+) from deamido-NAD(+) (ammonia route): step 1/1. In terms of biological role, catalyzes the ATP-dependent amidation of deamido-NAD to form NAD. Uses ammonia as a nitrogen source. This Shigella dysenteriae serotype 1 (strain Sd197) protein is NH(3)-dependent NAD(+) synthetase.